Here is a 252-residue protein sequence, read N- to C-terminus: uncharacterized protein (252 aa).

The first 20 residues, 1–20, serve as a signal peptide directing secretion; that stretch reads MIATLGNLIIPVIFVNYVAS.

Belongs to the ascovirus HvAV ORF17 family.

This is an uncharacterized protein from Spodoptera frugiperda ascovirus 1a (SfAV-1a).